Consider the following 341-residue polypeptide: MDYKKAGVDIEAGYKAVELMKKHIQGTMRSEVLTGIGGFSGAFSLTSFKDMEEPTLVSGTDGVGTKLKLAFILDKHDTIGIDCVAMCVNDIACAGGEPLFFLDYIACGKNEPEKIATIVSGVAEGCKQSNAALIGGETAEMPGFYPVEEYDLAGFAVGIVDRKKLITGDKLKHGDVLIGIASSGIHSNGYSLVRKVFRMEKEALNTYYESLSGTLGEVLLTPTKIYVKALNSLKTGNVEVKACSHITGGGFYENIPRMLREGVTAIVKKDSYVIPPIFHMLQKDGSIEEQMMYNTYNMGIGMMIAVDKADADKAVSLLSVAGETAYIVGEIQDGEKGICLC.

It belongs to the AIR synthase family.

Its subcellular location is the cytoplasm. The enzyme catalyses 2-formamido-N(1)-(5-O-phospho-beta-D-ribosyl)acetamidine + ATP = 5-amino-1-(5-phospho-beta-D-ribosyl)imidazole + ADP + phosphate + H(+). It participates in purine metabolism; IMP biosynthesis via de novo pathway; 5-amino-1-(5-phospho-D-ribosyl)imidazole from N(2)-formyl-N(1)-(5-phospho-D-ribosyl)glycinamide: step 2/2. This Lachnoclostridium phytofermentans (strain ATCC 700394 / DSM 18823 / ISDg) (Clostridium phytofermentans) protein is Phosphoribosylformylglycinamidine cyclo-ligase.